The sequence spans 515 residues: Maturase K (515 aa).

It belongs to the intron maturase 2 family. MatK subfamily.

It is found in the plastid. The protein resides in the chloroplast. In terms of biological role, usually encoded in the trnK tRNA gene intron. Probably assists in splicing its own and other chloroplast group II introns. The sequence is that of Maturase K from Pinus cembra (Swiss stone pine).